Consider the following 611-residue polypeptide: Protein decapping 5 (611 aa).

The Sm domain maps to 9–92 (KSSSAADSYV…IKDLQVKASP (84 aa)). 6 disordered regions span residues 111–153 (HYPS…AMPL), 183–238 (GLPQ…PSSL), 264–301 (SSSL…PTLP), 318–362 (EAST…DKPK), 396–455 (QVSS…AGRS), and 519–611 (FFDS…NRTT). 2 stretches are compositionally biased toward polar residues: residues 117–140 (PTSG…NGQP) and 203–214 (NSLQQPLQYPNF). Low complexity predominate over residues 264–281 (SSSLQSTLQSAPSPSLAS). 3 stretches are compositionally biased toward polar residues: residues 318–330 (EAST…NKPS), 396–413 (QVSS…TSEA), and 424–437 (ARPT…SFPN). Residues 441–453 (YRGRGRGRGRGAG) show a composition bias toward basic residues. In terms of domain architecture, DFDF spans 453–489 (GRSHQVMKFTEDFDFTAMNEKFNKDEVWGHLGKSTTL). The FFD box motif lies at 512–527 (PVYNKDDFFDSLSSNT). The segment covering 528 to 547 (IDRESQNSRPRFSEQRKLDT) has biased composition (basic and acidic residues). The TFG box motif lies at 534–554 (NSRPRFSEQRKLDTETFGEFS). The segment covering 559–604 (GRGGRGGYGRNNGYSRGGYGGRGYGGYGGRGGGGGGYGYGGRGQGR) has biased composition (gly residues).

Belongs to the LSM14 family. In terms of assembly, homodimer. Component of the decapping complex. Interacts with DCP1 and DCP2.

It is found in the cytoplasm. Its subcellular location is the P-body. As a component of the decapping complex, involved in the degradation of mRNAs. Promotes P-body formation. Translational repressor. The polypeptide is Protein decapping 5 (DCP5) (Arabidopsis thaliana (Mouse-ear cress)).